Reading from the N-terminus, the 146-residue chain is Acidic phospholipase A2 S8-51 (146 aa).

The signal sequence occupies residues 1-19; sequence MYPAHLLVLLAVCVSLLGA. A propeptide spanning residues 20–27 is cleaved from the precursor; the sequence is ASIPPQPL. 7 disulfide bridges follow: C38–C98, C54–C145, C56–C72, C71–C126, C78–C119, C87–C112, and C105–C117. Y55, G57, and G59 together coordinate Ca(2+). Residue H75 is part of the active site. D76 contributes to the Ca(2+) binding site. D120 is a catalytic residue.

The protein belongs to the phospholipase A2 family. Group I subfamily. D49 sub-subfamily. Ca(2+) is required as a cofactor. Expressed by the venom gland.

The protein localises to the secreted. It carries out the reaction a 1,2-diacyl-sn-glycero-3-phosphocholine + H2O = a 1-acyl-sn-glycero-3-phosphocholine + a fatty acid + H(+). Snake venom phospholipase A2 (PLA2) that inhibits collagen-induced platelet aggregation. PLA2 catalyzes the calcium-dependent hydrolysis of the 2-acyl groups in 3-sn-phosphoglycerides. The chain is Acidic phospholipase A2 S8-51 from Austrelaps superbus (Lowland copperhead snake).